Reading from the N-terminus, the 607-residue chain is CUB and zona pellucida-like domain-containing protein 1 (607 aa).

A signal peptide spans 1-24 (MELVRRLMPLTLLILSCLAELTMA). Cysteines 17 and 58 form a disulfide. 2 CUB domains span residues 25-146 (EAEG…YFFS) and 154-265 (CGGY…YTSI). The Lumenal segment spans residues 25–568 (EAEGNASCTV…EETPNQPFNS (544 aa)). 3 N-linked (GlcNAc...) asparagine glycosylation sites follow: N29, N57, and N67. 3 disulfides stabilise this stretch: C85/C107, C154/C180, and C207/C229. In terms of domain architecture, ZP spans 276 to 519 (TCSSDRMRVI…SRCNQGCVSR (244 aa)). N394 and N419 each carry an N-linked (GlcNAc...) asparagine glycan. A disulfide bridge connects residues C442 and C498. Residues 569–589 (VHLFSFMVLALNVVTVATITV) traverse the membrane as a helical segment. Residues 590-607 (RHFVNQRADYKYQKLQNY) are Cytoplasmic-facing.

In terms of tissue distribution, detected in pancreas and epithelium of ovary. Expressed at higher levels in ovarian tumors than in normal tissue.

It localises to the zymogen granule membrane. Its function is as follows. Localized to zymogen granules, where it functions in trypsinogen activation. May indirectly regulate cell motility, cell-cell and cell/extracellular matrix interactions. The protein is CUB and zona pellucida-like domain-containing protein 1 of Homo sapiens (Human).